The following is a 146-amino-acid chain: Globin-1 (146 aa).

Positions 9–146 (QLTADVKKDL…KLVAVVQAAL (138 aa)) constitute a Globin domain. Heme b is bound at residue His101.

It belongs to the globin family. In terms of assembly, homodimer.

The protein localises to the cytoplasm. In Anadara broughtonii (Blood clam), this protein is Globin-1.